A 742-amino-acid chain; its full sequence is Pyriculol/pyriculariol biosynthesis cluster transcription factor 1 (742 aa).

Residues 23 to 49 constitute a DNA-binding region (zn(2)-C6 fungal-type); it reads CVLCQHRKIKCDRSFPCANCQRANVQC. Residues 85–116 are disordered; it reads GKPDIARLTTKRSSLSQSPPKGEEPLPEWNRH. The segment covering 105–116 has biased composition (basic and acidic residues); sequence KGEEPLPEWNRH.

It is found in the nucleus. Functionally, transcriptional regulator; part of the gene cluster that mediates the biosynthesis of pyriculol and pyriculariol, two heptaketides that induce lesion formation upon application on rice leaves but are dispensable for pathogenicity. With TRF2, negatively regulates the expression of the gene cluster and the subsequent pyriculol and pyriculariol production. This Pyricularia oryzae (strain 70-15 / ATCC MYA-4617 / FGSC 8958) (Rice blast fungus) protein is Pyriculol/pyriculariol biosynthesis cluster transcription factor 1.